We begin with the raw amino-acid sequence, 352 residues long: Membrane progestin receptor alpha (352 aa).

At 1-75 (MATVVMEQIG…FLTLFQRHNE (75 aa)) the chain is on the cytoplasmic side. A helical transmembrane segment spans residues 76-96 (TLNVWTHLLAAFIILVKWQEI). The Extracellular portion of the chain corresponds to 97–110 (SETVDFLRDPHAQP). Residues 111 to 131 (LFIVLLAAFTYLSFSALAHLL) traverse the membrane as a helical segment. Residues 132 to 139 (SAKSELSY) lie on the Cytoplasmic side of the membrane. A helical transmembrane segment spans residues 140 to 160 (YTFYFLDYVGVAVYQYGSALA). Topologically, residues 161–175 (HYYYAIEKEWHTKVQ) are extracellular. The chain crosses the membrane as a helical span at residues 176 to 196 (GLFLPAAAFLAWLTCFGCCYG). The Cytoplasmic portion of the chain corresponds to 197–242 (KYASPELPKVANKLFQVVPSALAYCLDISPVVHRIYSCYQEGCSDP). A helical membrane pass occupies residues 243–263 (VVAYHFYHVVFFLIGAYFFCC). The Extracellular portion of the chain corresponds to 264-275 (PHPESLFPGKCD). The chain crosses the membrane as a helical span at residues 276–296 (FIGQGHQLFHVFVVVCTLTQV). The Cytoplasmic segment spans residues 297–316 (EALRTDFTERRPFYERLHGD). A helical membrane pass occupies residues 317 to 337 (LAHDAVALFIFTACCSALTAF). At 338-352 (YVRQRVRASLHEKGE) the chain is on the extracellular side.

This sequence belongs to the ADIPOR family. In terms of tissue distribution, strongly expressed in ovary and brain; lower expression in testis and pituitary. Not detected in heart, kidney, spleen, intestine, gill and muscle.

The protein localises to the cell membrane. Functionally, steroid membrane receptor. Binds progesterone, progestin and 17-hydroxyprogesterone in vitro. Capable of mediating progestin-induced oocyte maturation. The polypeptide is Membrane progestin receptor alpha (mpra) (Cynoscion nebulosus (Spotted seatrout)).